A 492-amino-acid chain; its full sequence is Steroid 21-hydroxylase (492 aa).

Residues arginine 91 and lysine 120 each coordinate heme b. Arginine 231 provides a ligand contact to 17alpha-hydroxyprogesterone. Residue arginine 231 coordinates progesterone. The heme b site is built by histidine 363, arginine 424, and cysteine 426.

This sequence belongs to the cytochrome P450 family. It depends on heme b as a cofactor.

It localises to the endoplasmic reticulum membrane. The protein resides in the microsome membrane. The catalysed reaction is 17alpha-hydroxyprogesterone + reduced [NADPH--hemoprotein reductase] + O2 = 11-deoxycortisol + oxidized [NADPH--hemoprotein reductase] + H2O + H(+). The enzyme catalyses progesterone + reduced [NADPH--hemoprotein reductase] + O2 = 21-hydroxyprogesterone + oxidized [NADPH--hemoprotein reductase] + H2O + H(+). In terms of biological role, specifically catalyzes the 21-hydroxylation of steroids. Required for the adrenal synthesis of mineralocorticoids and glucocorticoids. The chain is Steroid 21-hydroxylase (CYP21) from Canis lupus familiaris (Dog).